A 445-amino-acid chain; its full sequence is Methylenetetrahydrofolate--tRNA-(uracil-5-)-methyltransferase TrmFO (445 aa).

9 to 14 (GGGLAG) is an FAD binding site.

Belongs to the MnmG family. TrmFO subfamily. The cofactor is FAD.

It is found in the cytoplasm. It catalyses the reaction uridine(54) in tRNA + (6R)-5,10-methylene-5,6,7,8-tetrahydrofolate + NADH + H(+) = 5-methyluridine(54) in tRNA + (6S)-5,6,7,8-tetrahydrofolate + NAD(+). The catalysed reaction is uridine(54) in tRNA + (6R)-5,10-methylene-5,6,7,8-tetrahydrofolate + NADPH + H(+) = 5-methyluridine(54) in tRNA + (6S)-5,6,7,8-tetrahydrofolate + NADP(+). Its function is as follows. Catalyzes the folate-dependent formation of 5-methyl-uridine at position 54 (M-5-U54) in all tRNAs. The protein is Methylenetetrahydrofolate--tRNA-(uracil-5-)-methyltransferase TrmFO of Rhizorhabdus wittichii (strain DSM 6014 / CCUG 31198 / JCM 15750 / NBRC 105917 / EY 4224 / RW1) (Sphingomonas wittichii).